Here is a 113-residue protein sequence, read N- to C-terminus: Cell division protein FtsB (113 aa).

The Cytoplasmic segment spans residues 1–3; sequence MRL. Residues 4–21 traverse the membrane as a helical segment; sequence ISLLLFVLLLAIQYPLWL. Residues 22–113 lie on the Periplasmic side of the membrane; sequence GKGGWLRVWD…PNSVAGRGGH (92 aa). Positions 34–64 form a coiled coil; sequence RQVNEQTVHNQALKLRNAKLEGEVKDLQDGT. The segment at 93-113 is disordered; the sequence is KVSATPPLPPPPNSVAGRGGH.

Belongs to the FtsB family. Part of a complex composed of FtsB, FtsL and FtsQ.

The protein localises to the cell inner membrane. Its function is as follows. Essential cell division protein. May link together the upstream cell division proteins, which are predominantly cytoplasmic, with the downstream cell division proteins, which are predominantly periplasmic. The polypeptide is Cell division protein FtsB (Cupriavidus metallidurans (strain ATCC 43123 / DSM 2839 / NBRC 102507 / CH34) (Ralstonia metallidurans)).